We begin with the raw amino-acid sequence, 41 residues long: Peptide Hact-SCRiP1 (41 aa).

Cystine bridges form between C5-C37, C12-C31, C19-C38, and C26-C39.

Expressed in tentacles.

The protein localises to the nematocyst. It localises to the secreted. Functionally, peptide with unknown function. Does not exhibit any effect on human ion channel TRPV1 in a Xenopus laevis oocytes assay. This is Peptide Hact-SCRiP1 from Heliofungia actiniformis (Mushroom coral).